The chain runs to 253 residues: Probable U3 small nucleolar RNA-associated protein 11 (253 aa).

The interval 1–21 (MAAAFRKAVKSRQREYRERSQ) is disordered. Glycyl lysine isopeptide (Lys-Gly) (interchain with G-Cter in SUMO2) cross-links involve residues K74, K83, and K86. A Phosphothreonine modification is found at T90. Residues K103, K120, K143, K144, K180, K211, K218, K235, and K236 each participate in a glycyl lysine isopeptide (Lys-Gly) (interchain with G-Cter in SUMO2) cross-link. S241 carries the phosphoserine modification. K246 participates in a covalent cross-link: Glycyl lysine isopeptide (Lys-Gly) (interchain with G-Cter in SUMO2).

The protein belongs to the UTP11 family. As to quaternary structure, part of the small subunit (SSU) processome, composed of more than 70 proteins and the RNA chaperone small nucleolar RNA (snoRNA) U3.

The protein localises to the nucleus. It localises to the nucleolus. Part of the small subunit (SSU) processome, first precursor of the small eukaryotic ribosomal subunit. During the assembly of the SSU processome in the nucleolus, many ribosome biogenesis factors, an RNA chaperone and ribosomal proteins associate with the nascent pre-rRNA and work in concert to generate RNA folding, modifications, rearrangements and cleavage as well as targeted degradation of pre-ribosomal RNA by the RNA exosome. Involved in nucleolar processing of pre-18S ribosomal RNA. The chain is Probable U3 small nucleolar RNA-associated protein 11 from Rattus norvegicus (Rat).